The sequence spans 1119 residues: SH3 and PX domain-containing protein 2A (1119 aa).

Residues 4 to 128 (RTVLDVKVVD…RFFETKPDDI (125 aa)) form the PX domain. 2 consecutive SH3 domains span residues 149-208 (MVLE…SQSG) and 249-308 (SREE…KLKD). 5 disordered regions span residues 388 to 429 (SSAT…PPRR), 494 to 595 (APSS…SNPA), 641 to 815 (SSDD…HESV), 914 to 941 (NLRS…AMLN), and 957 to 1004 (RPQS…SSFT). An SH3 3 domain is found at 445-504 (TVEAEYYTIAEFQSSISDGISFRGGQKADVIEKNSGGWWYVQIGDTEGWAPSSYIDKRKK). 2 stretches are compositionally biased toward basic and acidic residues: residues 581-590 (PKPEPRKFEI) and 688-718 (GRAE…DVEI). Low complexity predominate over residues 779–802 (TASVVSSEDSTSSRSTSDLSSVYS). A compositionally biased stretch (basic and acidic residues) spans 806-815 (RGGESDHESV). Residues 812–871 (HESVLFRTTDAYERAQESELSFPAGVEVEVLEKQESGWWFVRWGSDEGWVPTFYLEPIKH) enclose the SH3 4 domain. The region spanning 1058–1119 (NLREVYVSIA…VPSNYLERKK (62 aa)) is the SH3 5 domain.

Belongs to the SH3PXD2 family. Tyrosine phosphorylated.

The protein resides in the cytoplasm. Its subcellular location is the cell projection. It is found in the podosome. In terms of biological role, adapter protein involved in invadopodia and podosome formation and extracellular matrix degradation. The sequence is that of SH3 and PX domain-containing protein 2A (sh3pxd2a) from Danio rerio (Zebrafish).